Here is a 632-residue protein sequence, read N- to C-terminus: PTS system mannitol-specific EIICBA component (632 aa).

The PTS EIIC type-2 domain occupies 12–341 (FGRFLSNMIM…ILLKYDFNTI (330 aa)). The next 6 helical transmembrane spans lie at 24 to 45 (ISIFIAWGMMNALFMPLGWQPN), 50 to 70 (QLISPMIFYLLPILIGYTGGS), 134 to 155 (SLAILGILLAIISFFTIGPFIE), 165 to 185 (IQIILSYNLLPLTSIIIEPAK), 273 to 292 (LILGGMSGIFILVLLHGGLI), and 313 to 334 (FSNIISVACSFLVSFISSSILL). Residues 374–469 (KTIIVACDAG…KLVENMVFLY (96 aa)) enclose the PTS EIIB type-2 domain. C380 serves as the catalytic Phosphocysteine intermediate; for EIIB activity. Position 380 is a phosphocysteine; by EIIA (C380). Residues 488 to 630 (FQLNEENIIL…KEALSLLTME (143 aa)) form the PTS EIIA type-2 domain. The Tele-phosphohistidine intermediate; for EIIA activity role is filled by H548. Residue H548 is modified to Phosphohistidine; by HPr.

In terms of assembly, homodimer. In terms of processing, an intramolecular phosphotransfer takes places between His-548 and Cys-380.

The protein resides in the cell inner membrane. It catalyses the reaction D-mannitol(out) + N(pros)-phospho-L-histidyl-[protein] = D-mannitol 1-phosphate(in) + L-histidyl-[protein]. In terms of biological role, the phosphoenolpyruvate-dependent sugar phosphotransferase system (sugar PTS), a major carbohydrate active transport system, catalyzes the phosphorylation of incoming sugar substrates concomitantly with their translocation across the cell membrane. This system is involved in D-mannitol transport. In Buchnera aphidicola subsp. Acyrthosiphon pisum (strain APS) (Acyrthosiphon pisum symbiotic bacterium), this protein is PTS system mannitol-specific EIICBA component (mtlA).